Here is a 186-residue protein sequence, read N- to C-terminus: Signal peptidase complex catalytic subunit SEC11 (186 aa).

Residues 1-20 lie on the Cytoplasmic side of the membrane; that stretch reads MDALGLSKLRHLKPRQLLSQ. The chain crosses the membrane as a helical; Signal-anchor for type II membrane protein span at residues 21-41; that stretch reads VLNFALILSTAFMLWKGLSVA. The Lumenal portion of the chain corresponds to 42–186; sequence TDSPSPIVVV…MGLLVIVQRE (145 aa). Catalysis depends on charge relay system residues S55, H102, and D128. Residues 172–183 form a C-terminal short (CTS) helix region; it reads ALLGIMGLLVIV.

The protein belongs to the peptidase S26B family. As to quaternary structure, component of the signal peptidase complex (SPC) composed of a catalytic subunit SEC11 and three accessory subunits SPC1, SPC2 and SPC3. The complex induces a local thinning of the ER membrane which is used to measure the length of the signal peptide (SP) h-region of protein substrates. This ensures the selectivity of the complex towards h-regions shorter than 18-20 amino acids. SPC associates with the translocon complex.

It localises to the endoplasmic reticulum membrane. It catalyses the reaction Cleavage of hydrophobic, N-terminal signal or leader sequences from secreted and periplasmic proteins.. Catalytic component of the signal peptidase complex (SPC) which catalyzes the cleavage of N-terminal signal sequences from nascent proteins as they are translocated into the lumen of the endoplasmic reticulum. Specifically cleaves N-terminal signal peptides that contain a hydrophobic alpha-helix (h-region) shorter than 18-20 amino acids. This is Signal peptidase complex catalytic subunit SEC11 (SEC11) from Tuber melanosporum (strain Mel28) (Perigord black truffle).